We begin with the raw amino-acid sequence, 217 residues long: Magnetosome protein MamA (217 aa).

TPR repeat units follow at residues 12–44, 46–79, 80–113, 114–147, 148–181, and 182–215; these read VTLYTHYGLSVAKKLGANMVDAFRSAFSVNDDI, QVYYRDKGISHAKAGRYSEAVVMLEQVYDADAFD, VEVALHLGIAYVKTGAVDRGTELLERSIADAPDN, IKVATVLGLTYVQVQKYDLAVPLLVKVAEANPVN, FNVRFRLGVALDNLGRFDEAIDSFKIALGLRPNE, and GKVHRAIAYSYEQMGSHEEALPHFKKANELDERS. Residues 41-112 are N-terminal domain; it reads NDDIRQVYYR…LERSIADAPD (72 aa). The C-terminal domain stretch occupies residues 113 to 217; it reads NIKVATVLGL…ANELDERSAV (105 aa).

It belongs to the magnetosome MamA family. As to quaternary structure, forms round, 20 nm diameter complexes with a central cavity. Probably binds MamC. Interacts with full-length Mms6.

The protein resides in the magnetosome membrane. Its function is as follows. Probably forms a large homooligomer on which other magnetosome subunits assemble. Required for formation of functional magnetosomes from pre-existing vesicles. The sequence is that of Magnetosome protein MamA from Magnetospirillum gryphiswaldense (strain DSM 6361 / JCM 21280 / NBRC 15271 / MSR-1).